Consider the following 449-residue polypeptide: Glutamyl-tRNA reductase (449 aa).

Substrate contacts are provided by residues 48 to 51 (TCNR), Ser-99, 104 to 106 (EDQ), and Gln-110. The active-site Nucleophile is the Cys-49. NADP(+) is bound at residue 179–184 (GAGEIG).

It belongs to the glutamyl-tRNA reductase family. Homodimer.

The enzyme catalyses (S)-4-amino-5-oxopentanoate + tRNA(Glu) + NADP(+) = L-glutamyl-tRNA(Glu) + NADPH + H(+). The protein operates within porphyrin-containing compound metabolism; protoporphyrin-IX biosynthesis; 5-aminolevulinate from L-glutamyl-tRNA(Glu): step 1/2. In terms of biological role, catalyzes the NADPH-dependent reduction of glutamyl-tRNA(Glu) to glutamate 1-semialdehyde (GSA). This Methanosarcina barkeri (strain Fusaro / DSM 804) protein is Glutamyl-tRNA reductase.